The following is a 620-amino-acid chain: Chaperone protein DnaK (620 aa).

The residue at position 174 (Thr-174) is a Phosphothreonine; by autocatalysis. The disordered stretch occupies residues 590–620; that stretch reads AAGAGPDMSGAGPQGDTYAGDDVVDGDYREV.

Belongs to the heat shock protein 70 family.

Acts as a chaperone. The polypeptide is Chaperone protein DnaK (Lachnoclostridium phytofermentans (strain ATCC 700394 / DSM 18823 / ISDg) (Clostridium phytofermentans)).